A 1505-amino-acid polypeptide reads, in one-letter code: Actin cytoskeleton-regulatory complex protein PAN1 (1505 aa).

A disordered region spans residues 1-30 (MFNSYQATGMGYNPNQQQQQPPPPQQQQQL). An EH 1 domain is found at 85–174 (DQKKFEHLFR…QKWHNEVQSF (90 aa)). An EF-hand 1 domain is found at 118–153 (LTPVVLAEIWTLSDIDKTGALLFPEFALSLHLCNMA). 2 stretches are compositionally biased toward polar residues: residues 364 to 393 (ATGY…GYNF) and 403 to 413 (ATGLQRQPTGV). Disordered regions lie at residues 364-416 (ATGY…VLQQ) and 422-441 (LQQQ…PGEW). The 90-residue stretch at 492-581 (EKQIYDRLFQ…PELIPPADKT (90 aa)) folds into the EH 2 domain. The 36-residue stretch at 525-560 (LGRQDLEAIWTLADTDDVGKLNKNQFAVAMHLIYRR) folds into the EF-hand 2 domain. Polar residues predominate over residues 588–604 (SLKNSLKNGGAKQTRSK). Residues 588 to 620 (SLKNSLKNGGAKQTRSKPMTKPDGSRFKNDDSD) are disordered. The stretch at 677-752 (RTSDREVDAL…LVKLQLKRED (76 aa)) forms a coiled coil. Disordered regions lie at residues 867-927 (EFAR…TYST) and 948-1505 (EKLG…GRVL). Residues 872–885 (ADNTTTARSSSAYA) are compositionally biased toward polar residues. Basic and acidic residues-rich tracts occupy residues 960–980 (KAAE…EEPP), 1034–1050 (SQRE…EKQY), and 1069–1079 (SQEHIVKENAK). Residues 1086–1096 (QAPTSNYSQQP) are compositionally biased toward polar residues. Residues 1109-1123 (RATETEQAESKKESE) show a composition bias toward basic and acidic residues. The segment covering 1133–1175 (AAASTEPAQPAQPAQASQASKPAQPAQPANSTEPASASASEQP) has biased composition (low complexity). Positions 1193-1208 (VDTQKISMQRNFQRGT) are enriched in polar residues. Acidic residues predominate over residues 1216 to 1225 (DSEEEDSEDE). A compositionally biased stretch (basic and acidic residues) spans 1261 to 1280 (PSKDEKSIGAENASGHESKM). A compositionally biased stretch (polar residues) spans 1283–1319 (ELSSSENTAAGVSQVNETPAQSSYEEPSLQEQSSYES). A compositionally biased stretch (low complexity) spans 1321-1330 (AVPAAPSLPE). Positions 1331 to 1453 (SVPPPAPAPE…SIPPPPPAPP (123 aa)) are enriched in pro residues. Residues 1454-1472 (LSSNDSSLASAAAPPAGGA) are compositionally biased toward low complexity. The 18-residue stretch at 1474 to 1491 (NIGALLGQITGGKSLKKV) folds into the WH2 domain.

This sequence belongs to the PAN1 family. Component of the PAN1 actin cytoskeleton-regulatory complex.

The protein resides in the cell membrane. It is found in the endosome membrane. The protein localises to the cytoplasm. It localises to the cytoskeleton. Its subcellular location is the actin patch. Component of the PAN1 actin cytoskeleton-regulatory complex required for the internalization of endosomes during actin-coupled endocytosis. The complex links the site of endocytosis to the cell membrane-associated actin cytoskeleton. Mediates uptake of external molecules and vacuolar degradation of plasma membrane proteins. Plays a role in the proper organization of the cell membrane-associated actin cytoskeleton and promotes its destabilization. The chain is Actin cytoskeleton-regulatory complex protein PAN1 (PAN1) from Lodderomyces elongisporus (strain ATCC 11503 / CBS 2605 / JCM 1781 / NBRC 1676 / NRRL YB-4239) (Yeast).